The chain runs to 75 residues: U6-lycotoxin-Ls1f (75 aa).

The signal sequence occupies residues 1–21 (MKLLLFTALVLVVISLVEVEA). A propeptide spanning residues 22–25 (ENER) is cleaved from the precursor.

It belongs to the neurotoxin 19 (CSTX) family. 06 (U6-Lctx) subfamily. Post-translationally, contains 4 disulfide bonds. As to expression, expressed by the venom gland.

The protein localises to the secreted. The polypeptide is U6-lycotoxin-Ls1f (Lycosa singoriensis (Wolf spider)).